The primary structure comprises 288 residues: MISRLLSLLCLRLCVGQTDIPENGSPPKPSLSAWPSTVLPTKSHVTMQCKSPTPSKYFILKKEGFALNSVKPYNLTEETADFHFTDLRQNDGGHYTCEYYSKWPHDTPSHPSNALFLLVTGYLPQPSFQAHHRGTVTAGSKVTLQCQKAGSVLGPVKFALLKVGHSTPVQTRSSTGMVSDFSLQNVTARDSGEYSCVYYQAKAPYRASGPSNLLEISVIDNHLPQDLAASTFPPQLTATSPKTPGTMTEGYTVDNLIRVGVAAAILLIVGGFLVEAWHSERLSPNKPW.

The first 16 residues, 1–16 (MISRLLSLLCLRLCVG), serve as a signal peptide directing secretion. Residues 17 to 258 (QTDIPENGSP…EGYTVDNLIR (242 aa)) are Extracellular-facing. Ig-like C2-type domains follow at residues 27–113 (PKPS…HPSN) and 124–217 (PQPS…LEIS). Intrachain disulfides connect cysteine 49-cysteine 97 and cysteine 146-cysteine 196. N-linked (GlcNAc...) asparagine glycans are attached at residues asparagine 74 and asparagine 185. A helical membrane pass occupies residues 259 to 279 (VGVAAAILLIVGGFLVEAWHS). Over 280-288 (ERLSPNKPW) the chain is Cytoplasmic.

In terms of assembly, interacts with Fc receptor gamma chain FCER1G. Post-translationally, N-glycosylated. Expressed in lung, uterus, lymph nodes, spleen, thymus and bone marrow. Expressed in bone marrow CD11b(+)Gr-1(+) granulocyte precursors and mature neutrophils.

It localises to the cell membrane. May act as receptor. Negatively regulates TCR-mediated CD4(+) T cell proliferation and activation, possibly by binding an unknown ligand on the T cell surface. Enhances Toll-like receptor-mediated production of pro-inflammatory cytokines by macrophages and neutrophils. This chain is T-cell-interacting, activating receptor on myeloid cells protein 1 (Tarm1), found in Mus musculus (Mouse).